A 694-amino-acid chain; its full sequence is TBC1 domain family member 14 (694 aa).

Serine 92 is subject to Phosphoserine. Residues 272 to 289 show a composition bias toward basic and acidic residues; the sequence is TAQKDSKKTQKEYEDKAG. Residues 272–305 are disordered; sequence TAQKDSKKTQKEYEDKAGRPSRPPSPKQNVRKNL. Phosphoserine is present on serine 296. The Rab-GAP TBC domain occupies 402 to 612; sequence GIPPSVRGKV…RIWDVFCRDG (211 aa).

Interacts with ULK1. May interact with RAB11A and RAB11B, but does not exhibit any GTPase-activating activity toward these proteins. Interacts with TRAPPC8.

The protein resides in the golgi apparatus. It localises to the cis-Golgi network. Its subcellular location is the trans-Golgi network. Plays a role in the regulation of starvation-induced autophagosome formation. Together with the TRAPPIII complex, regulates a constitutive trafficking step from peripheral recycling endosomes to the early Golgi, maintaining the cycling pool of ATG9 required for initiation of autophagy. In Mus musculus (Mouse), this protein is TBC1 domain family member 14 (Tbc1d14).